Here is a 212-residue protein sequence, read N- to C-terminus: uncharacterized protein (212 aa).

A helical membrane pass occupies residues 186-206 (VITLISFMLFSILFFLIFLIV).

Its subcellular location is the membrane. This is an uncharacterized protein from Mycoplasma genitalium (strain ATCC 33530 / DSM 19775 / NCTC 10195 / G37) (Mycoplasmoides genitalium).